The following is a 346-amino-acid chain: GTP 3',8-cyclase (346 aa).

The Radical SAM core domain occupies 10 to 240 (QRSRPLRVLR…VTRIRARWPL (231 aa)). Arginine 19 is a GTP binding site. Residues cysteine 26 and cysteine 30 each coordinate [4Fe-4S] cluster. Residue tyrosine 32 coordinates S-adenosyl-L-methionine. Cysteine 33 provides a ligand contact to [4Fe-4S] cluster. Arginine 65 contributes to the GTP binding site. Glycine 69 contacts S-adenosyl-L-methionine. Residue threonine 104 coordinates GTP. Serine 129 is a binding site for S-adenosyl-L-methionine. Lysine 177 contacts GTP. Methionine 211 contacts S-adenosyl-L-methionine. [4Fe-4S] cluster contacts are provided by cysteine 274 and cysteine 277. 279–281 (RLR) contributes to the GTP binding site. Residue cysteine 291 coordinates [4Fe-4S] cluster. The disordered stretch occupies residues 326–346 (SDERQQTTGSMPHAEMAYLGG).

This sequence belongs to the radical SAM superfamily. MoaA family. As to quaternary structure, monomer and homodimer. [4Fe-4S] cluster serves as cofactor.

It catalyses the reaction GTP + AH2 + S-adenosyl-L-methionine = (8S)-3',8-cyclo-7,8-dihydroguanosine 5'-triphosphate + 5'-deoxyadenosine + L-methionine + A + H(+). It functions in the pathway cofactor biosynthesis; molybdopterin biosynthesis. Functionally, catalyzes the cyclization of GTP to (8S)-3',8-cyclo-7,8-dihydroguanosine 5'-triphosphate. The chain is GTP 3',8-cyclase from Parasynechococcus marenigrum (strain WH8102).